Here is a 368-residue protein sequence, read N- to C-terminus: MAGERRDSKAAAFFCLAWALCLALPGFPQHVGGREDRADWTQEKYSHRPTILNATSILQVTSQTNVNRMWQNDLHPILIERYPGSPGSYAVRQHIKHRLQGLQAGWLVEEDTFQSHTPYGYRTFSNIISTLNPLAKRHLVVACHYDSKYFLPQLDGKVFVGATDSAVPCAMMLELARSLDRQLSFLKQSSLPPKADLSLKLIFFDGEEAFVRWSPSDSLYGSRSLAQKMASTPHPPGARNTNQIQGIDLFVLLDLIGARNPVFPVYFLNTARWFGRLEAIEQSLHDLGLLNNYSSERQYFRSNIRRYPVEDDHIPFLRRGVPILHLIPSPFPRVWHTMEDNEENLDKPTIDNISKILQVFVLEYLNLG.

The signal sequence occupies residues 1-23 (MAGERRDSKAAAFFCLAWALCLA). Residue asparagine 53 is glycosylated (N-linked (GlcNAc...) asparagine). Cysteine 143 and cysteine 169 form a disulfide bridge. Aspartate 164 is a binding site for Zn(2+). Glutamate 207 functions as the Proton acceptor in the catalytic mechanism. Glutamate 208 is a Zn(2+) binding site. The Proton acceptor role is filled by aspartate 254. Asparagine 292 carries an N-linked (GlcNAc...) asparagine glycan. Residue histidine 336 participates in Zn(2+) binding. N-linked (GlcNAc...) asparagine glycosylation occurs at asparagine 352.

This sequence belongs to the glutaminyl-peptide cyclotransferase family. As to expression, expressed by the venom gland.

It localises to the secreted. It catalyses the reaction N-terminal L-glutaminyl-[peptide] = N-terminal 5-oxo-L-prolyl-[peptide] + NH4(+). Functionally, responsible for the biosynthesis of pyroglutamyl peptides. Has a bias against acidic and tryptophan residues adjacent to the N-terminal glutaminyl residue and a lack of importance of chain length after the second residue. Also catalyzes N-terminal pyroglutamate formation. The protein is Glutaminyl-peptide cyclotransferase (QPCT) of Boiga dendrophila (Mangrove snake).